Reading from the N-terminus, the 401-residue chain is Probable aspartic-type endopeptidase TRV_05382 (401 aa).

Positions 1 to 22 (MWHSPFFTAFTLFLGFFTLTLA) are cleaved as a signal peptide. N-linked (GlcNAc...) asparagine glycosylation is found at N80 and N102. Residues 94–398 (FVNEITIGNN…DHDGPKMGFA (305 aa)) form the Peptidase A1 domain. D110 is a catalytic residue. N-linked (GlcNAc...) asparagine glycosylation occurs at N282. The active site involves D292. N-linked (GlcNAc...) asparagine glycosylation is present at N329.

It belongs to the peptidase A1 family.

The protein resides in the secreted. In terms of biological role, probable aspartic-type endopeptidase which contributes to virulence. The protein is Probable aspartic-type endopeptidase TRV_05382 of Trichophyton verrucosum (strain HKI 0517).